A 275-amino-acid chain; its full sequence is 2-dehydro-3-deoxyphosphooctonate aldolase (275 aa).

Belongs to the KdsA family.

It localises to the cytoplasm. It carries out the reaction D-arabinose 5-phosphate + phosphoenolpyruvate + H2O = 3-deoxy-alpha-D-manno-2-octulosonate-8-phosphate + phosphate. Its pathway is carbohydrate biosynthesis; 3-deoxy-D-manno-octulosonate biosynthesis; 3-deoxy-D-manno-octulosonate from D-ribulose 5-phosphate: step 2/3. It functions in the pathway bacterial outer membrane biogenesis; lipopolysaccharide biosynthesis. The sequence is that of 2-dehydro-3-deoxyphosphooctonate aldolase from Francisella tularensis subsp. novicida (strain U112).